The chain runs to 335 residues: DNA-directed RNA polymerase subunit alpha (335 aa).

Residues 1–233 are alpha N-terminal domain (alpha-NTD); it reads MMLNATEFLT…QQISIFVDLE (233 aa). Positions 247-335 are alpha C-terminal domain (alpha-CTD); sequence VDPVLLRPVD…VDDRFSYRSR (89 aa).

The protein belongs to the RNA polymerase alpha chain family. As to quaternary structure, homodimer. The RNAP catalytic core consists of 2 alpha, 1 beta, 1 beta' and 1 omega subunit. When a sigma factor is associated with the core the holoenzyme is formed, which can initiate transcription.

It catalyses the reaction RNA(n) + a ribonucleoside 5'-triphosphate = RNA(n+1) + diphosphate. Functionally, DNA-dependent RNA polymerase catalyzes the transcription of DNA into RNA using the four ribonucleoside triphosphates as substrates. This is DNA-directed RNA polymerase subunit alpha from Psychrobacter sp. (strain PRwf-1).